The chain runs to 515 residues: 1-pyrroline-5-carboxylate dehydrogenase (515 aa).

Active-site residues include glutamate 286 and cysteine 320.

Belongs to the aldehyde dehydrogenase family. RocA subfamily.

It catalyses the reaction L-glutamate 5-semialdehyde + NAD(+) + H2O = L-glutamate + NADH + 2 H(+). It participates in amino-acid degradation; L-proline degradation into L-glutamate; L-glutamate from L-proline: step 2/2. The chain is 1-pyrroline-5-carboxylate dehydrogenase from Bacillus pumilus (strain SAFR-032).